A 254-amino-acid polypeptide reads, in one-letter code: RING-H2 finger protein ATL28 (254 aa).

Residues 25–45 (VVLTGVLLFVIFAGFFSLFLW) form a helical membrane-spanning segment. Residues 103–145 (CAICLSEFSDEDTVRLITVCRHPFHSNCIDLWFELHKTCPVCR) form an RING-type; atypical zinc finger.

This sequence belongs to the RING-type zinc finger family. ATL subfamily.

The protein localises to the membrane. The catalysed reaction is S-ubiquitinyl-[E2 ubiquitin-conjugating enzyme]-L-cysteine + [acceptor protein]-L-lysine = [E2 ubiquitin-conjugating enzyme]-L-cysteine + N(6)-ubiquitinyl-[acceptor protein]-L-lysine.. Its pathway is protein modification; protein ubiquitination. The sequence is that of RING-H2 finger protein ATL28 (ATL28) from Arabidopsis thaliana (Mouse-ear cress).